The following is a 97-amino-acid chain: Small cell adhesion glycoprotein (97 aa).

Over 1 to 36 (MTSLLTTPSPREELMTTPILQPTEALSPEDGASTAL) the chain is Extracellular. O-linked (GalNAc...) threonine glycosylation occurs at Thr2. Ser3 carries an O-linked (GalNAc...) serine glycan. O-linked (GalNAc...) threonine glycans are attached at residues Thr6 and Thr7. The O-linked (GalNAc...) serine glycan is linked to Ser9. Thr16, Thr17, and Thr23 each carry an O-linked (GalNAc...) threonine glycan. The helical; Signal-anchor for type III membrane protein transmembrane segment at 37 to 57 (IAVVITVVFLTLLSVVILIFF) threads the bilayer. Residues 58–97 (YLYKNKGSYVTYEPTEGEPSAIVQMESDLAKGSEKEEYFI) are Cytoplasmic-facing.

This sequence belongs to the SMAGP family. In terms of processing, O-glycosylated. The O-glycan is modified with sialic acid residues. In terms of tissue distribution, detected in breast, endometrium, colon and biliary tract. Detected in polarized epithelial structures characterized by cell-cell adhesion (at protein level).

It is found in the cell membrane. The protein resides in the cytoplasmic vesicle membrane. May play a role in epithelial cell-cell contacts. May play a role in tumor invasiveness and metastasis formation. The protein is Small cell adhesion glycoprotein (SMAGP) of Homo sapiens (Human).